The sequence spans 74 residues: Alpha-elapitoxin-Aa2d (74 aa).

Disulfide bonds link Cys3-Cys21, Cys14-Cys42, Cys27-Cys31, Cys46-Cys57, and Cys58-Cys63.

The protein belongs to the three-finger toxin family. Long-chain subfamily. Type II alpha-neurotoxin sub-subfamily. As to expression, expressed by the venom gland.

It is found in the secreted. Binds with high affinity to muscular (alpha-1/CHRNA1) and neuronal (alpha-7/CHRNA7) nicotinic acetylcholine receptor (nAChR) and inhibits acetylcholine from binding to the receptor, thereby impairing neuromuscular and neuronal transmission. The polypeptide is Alpha-elapitoxin-Aa2d (Acanthophis antarcticus (Common death adder)).